The primary structure comprises 274 residues: RNA polymerase sigma factor SigI4 (274 aa).

The Polymerase core binding motif lies at 87-100 (EEYSVGLMAFNEAI). The segment at residues 226–245 (LSELMGLVNVHRKTVERNRK) is a DNA-binding region (H-T-H motif).

Belongs to the sigma-70 factor family. SigI subfamily. Interacts with RsgI4.

Its subcellular location is the cytoplasm. Negatively regulated by the anti-sigma-I factor RsgI4. Binding of the polysaccharide substrate to RsgI4 may lead to the release and activation of SigI4. Functionally, sigma factors are initiation factors that promote the attachment of RNA polymerase to specific initiation sites and are then released. This sigma factor is involved in regulation of cellulosomal genes via an external polysaccharide-sensing mechanism. The sequence is that of RNA polymerase sigma factor SigI4 from Acetivibrio thermocellus (strain ATCC 27405 / DSM 1237 / JCM 9322 / NBRC 103400 / NCIMB 10682 / NRRL B-4536 / VPI 7372) (Clostridium thermocellum).